Consider the following 595-residue polypeptide: Apolipoprotein N-acyltransferase 2 (595 aa).

A run of 5 helical transmembrane segments spans residues 30–50 (FLAFAPVSLTHFVWIAPFGFF), 63–83 (LFFHGLLIGVVFYAISFHWII), 95–115 (VVAILILLFAGLLFGLKFPIF), 167–187 (AEITGVYGISFLVFIVSYTLF), and 210–230 (FITLPALLLLTFIVSGIFLFK). The region spanning 241 to 555 (LNVLIVQPDA…AEALSETIDV (315 aa)) is the CN hydrolase domain. The active-site Proton acceptor is Glu293. The active site involves Lys372. The active-site Nucleophile is Cys463. Residues 569–589 (LIPWLMLFLTGIYYLNLLIGI) traverse the membrane as a helical segment.

It belongs to the CN hydrolase family. Apolipoprotein N-acyltransferase subfamily.

Its subcellular location is the cell inner membrane. The enzyme catalyses N-terminal S-1,2-diacyl-sn-glyceryl-L-cysteinyl-[lipoprotein] + a glycerophospholipid = N-acyl-S-1,2-diacyl-sn-glyceryl-L-cysteinyl-[lipoprotein] + a 2-acyl-sn-glycero-3-phospholipid + H(+). Its pathway is protein modification; lipoprotein biosynthesis (N-acyl transfer). Its function is as follows. Catalyzes the phospholipid dependent N-acylation of the N-terminal cysteine of apolipoprotein, the last step in lipoprotein maturation. The protein is Apolipoprotein N-acyltransferase 2 of Leptospira interrogans serogroup Icterohaemorrhagiae serovar copenhageni (strain Fiocruz L1-130).